Reading from the N-terminus, the 535-residue chain is Light-independent protochlorophyllide reductase subunit B (535 aa).

Position 36 (Asp36) interacts with [4Fe-4S] cluster. Asp292 acts as the Proton donor in catalysis. 428-429 (GL) contributes to the substrate binding site.

This sequence belongs to the ChlB/BchB/BchZ family. As to quaternary structure, protochlorophyllide reductase is composed of three subunits; BchL, BchN and BchB. Forms a heterotetramer of two BchB and two BchN subunits. [4Fe-4S] cluster serves as cofactor.

The catalysed reaction is chlorophyllide a + oxidized 2[4Fe-4S]-[ferredoxin] + 2 ADP + 2 phosphate = protochlorophyllide a + reduced 2[4Fe-4S]-[ferredoxin] + 2 ATP + 2 H2O. It participates in porphyrin-containing compound metabolism; bacteriochlorophyll biosynthesis (light-independent). Component of the dark-operative protochlorophyllide reductase (DPOR) that uses Mg-ATP and reduced ferredoxin to reduce ring D of protochlorophyllide (Pchlide) to form chlorophyllide a (Chlide). This reaction is light-independent. The NB-protein (BchN-BchB) is the catalytic component of the complex. The sequence is that of Light-independent protochlorophyllide reductase subunit B from Pelodictyon phaeoclathratiforme (strain DSM 5477 / BU-1).